Reading from the N-terminus, the 219-residue chain is Octanoyltransferase (219 aa).

Residues 32 to 207 form the BPL/LPL catalytic domain; sequence ENSQDEIWIV…TLSQELGLDK (176 aa). Substrate is bound by residues 71–78, 138–140, and 151–153; these read RGGQVTYH, SLG, and GLA. Catalysis depends on C169, which acts as the Acyl-thioester intermediate.

This sequence belongs to the LipB family.

Its subcellular location is the cytoplasm. The enzyme catalyses octanoyl-[ACP] + L-lysyl-[protein] = N(6)-octanoyl-L-lysyl-[protein] + holo-[ACP] + H(+). It participates in protein modification; protein lipoylation via endogenous pathway; protein N(6)-(lipoyl)lysine from octanoyl-[acyl-carrier-protein]: step 1/2. Functionally, catalyzes the transfer of endogenously produced octanoic acid from octanoyl-acyl-carrier-protein onto the lipoyl domains of lipoate-dependent enzymes. Lipoyl-ACP can also act as a substrate although octanoyl-ACP is likely to be the physiological substrate. The chain is Octanoyltransferase from Shewanella halifaxensis (strain HAW-EB4).